Consider the following 219-residue polypeptide: Phosphatidylserine decarboxylase proenzyme (219 aa).

Serine 188 functions as the Schiff-base intermediate with substrate; via pyruvic acid in the catalytic mechanism. Pyruvic acid (Ser); by autocatalysis is present on serine 188.

Belongs to the phosphatidylserine decarboxylase family. PSD-A subfamily. As to quaternary structure, heterodimer of a large membrane-associated beta subunit and a small pyruvoyl-containing alpha subunit. The cofactor is pyruvate. Is synthesized initially as an inactive proenzyme. Formation of the active enzyme involves a self-maturation process in which the active site pyruvoyl group is generated from an internal serine residue via an autocatalytic post-translational modification. Two non-identical subunits are generated from the proenzyme in this reaction, and the pyruvate is formed at the N-terminus of the alpha chain, which is derived from the carboxyl end of the proenzyme. The post-translation cleavage follows an unusual pathway, termed non-hydrolytic serinolysis, in which the side chain hydroxyl group of the serine supplies its oxygen atom to form the C-terminus of the beta chain, while the remainder of the serine residue undergoes an oxidative deamination to produce ammonia and the pyruvoyl prosthetic group on the alpha chain.

The protein resides in the cell membrane. It catalyses the reaction a 1,2-diacyl-sn-glycero-3-phospho-L-serine + H(+) = a 1,2-diacyl-sn-glycero-3-phosphoethanolamine + CO2. The protein operates within phospholipid metabolism; phosphatidylethanolamine biosynthesis; phosphatidylethanolamine from CDP-diacylglycerol: step 2/2. Functionally, catalyzes the formation of phosphatidylethanolamine (PtdEtn) from phosphatidylserine (PtdSer). The chain is Phosphatidylserine decarboxylase proenzyme from Geobacter sp. (strain M21).